A 171-amino-acid polypeptide reads, in one-letter code: Large ribosomal subunit protein bL9 (171 aa).

Belongs to the bacterial ribosomal protein bL9 family.

Functionally, binds to the 23S rRNA. This Rickettsia peacockii (strain Rustic) protein is Large ribosomal subunit protein bL9.